We begin with the raw amino-acid sequence, 102 residues long: Monothiol glutaredoxin-S9 (102 aa).

A Glutaredoxin domain is found at 1–101; sequence MDKVVRMSSE…PLVKPFQANL (101 aa). Cys-21 is a binding site for [2Fe-2S] cluster.

It belongs to the glutaredoxin family. CC-type subfamily.

Its subcellular location is the cytoplasm. Its function is as follows. May only reduce GSH-thiol disulfides, but not protein disulfides. The chain is Monothiol glutaredoxin-S9 (GRXS9) from Arabidopsis thaliana (Mouse-ear cress).